Reading from the N-terminus, the 270-residue chain is Very long chain fatty acid elongase 3 (270 aa).

N-linked (GlcNAc...) asparagine glycosylation is present at N6. A run of 2 helical transmembrane segments spans residues F29–A49 and L63–V83. N110 is a glycosylation site (N-linked (GlcNAc...) asparagine). The next 5 helical transmembrane spans lie at F115–I135, P140–Y160, V164–Y184, L198–I218, and H235–C255. The Di-lysine motif motif lies at K266 to Q270.

Belongs to the ELO family. ELOVL3 subfamily. Interacts with TECR. In terms of processing, N-Glycosylated. In terms of tissue distribution, testis.

Its subcellular location is the endoplasmic reticulum membrane. It catalyses the reaction a very-long-chain acyl-CoA + malonyl-CoA + H(+) = a very-long-chain 3-oxoacyl-CoA + CO2 + CoA. It carries out the reaction eicosanoyl-CoA + malonyl-CoA + H(+) = 3-oxodocosanoyl-CoA + CO2 + CoA. The enzyme catalyses hexadecanoyl-CoA + malonyl-CoA + H(+) = 3-oxooctadecanoyl-CoA + CO2 + CoA. The catalysed reaction is octadecanoyl-CoA + malonyl-CoA + H(+) = 3-oxoeicosanoyl-CoA + CO2 + CoA. It catalyses the reaction (9Z)-octadecenoyl-CoA + malonyl-CoA + H(+) = 3-oxo-(11Z)-eicosenoyl-CoA + CO2 + CoA. It carries out the reaction (9Z,12Z)-octadecadienoyl-CoA + malonyl-CoA + H(+) = (11Z,14Z)-3-oxoicosa-11,14-dienoyl-CoA + CO2 + CoA. The enzyme catalyses (9Z,12Z,15Z)-octadecatrienoyl-CoA + malonyl-CoA + H(+) = (11Z,14Z,17Z)-3-oxoeicosatrienoyl-CoA + CO2 + CoA. The catalysed reaction is docosanoyl-CoA + malonyl-CoA + H(+) = 3-oxotetracosanoyl-CoA + CO2 + CoA. It catalyses the reaction tetradecanoyl-CoA + malonyl-CoA + H(+) = 3-oxohexadecanoyl-CoA + CO2 + CoA. It functions in the pathway lipid metabolism; polyunsaturated fatty acid biosynthesis. Catalyzes the first and rate-limiting reaction of the four reactions that constitute the long-chain fatty acids elongation cycle. This endoplasmic reticulum-bound enzymatic process allows the addition of 2 carbons to the chain of long- and very long-chain fatty acids (VLCFAs) per cycle. Condensing enzyme that exhibits activity toward saturated and unsaturated acyl-CoA substrates with higher activity toward C18 acyl-CoAs, especially C18:0 acyl-CoAs. May participate in the production of saturated and monounsaturated VLCFAs of different chain lengths that are involved in multiple biological processes as precursors of membrane lipids and lipid mediators. The chain is Very long chain fatty acid elongase 3 from Homo sapiens (Human).